An 870-amino-acid chain; its full sequence is Translation initiation factor IF-2 (870 aa).

The tract at residues 49 to 284 is disordered; the sequence is SFQNSAPAEK…TKRKERPLPE (236 aa). 2 stretches are compositionally biased toward basic and acidic residues: residues 70–81 and 94–109; these read RKNEKKQEDNAG and QNNDRNHKNRNDRDHS. The segment covering 116 to 127 has biased composition (low complexity); that stretch reads KPKAAALLQQFK. Basic and acidic residues-rich tracts occupy residues 144 to 159 and 168 to 183; these read AKKEYHEQLKYPKKEQ and NKESNNKKSEEVEKKV. Residues 254-279 show a composition bias toward basic residues; it reads RKRRKNKNKKRKQEQKPKKQITKRKE. Positions 371–540 constitute a tr-type G domain; that stretch reads KRPPVVTIMG…LLQADMMELK (170 aa). The interval 380–387 is G1; the sequence is GHVDHGKT. 380-387 provides a ligand contact to GTP; sequence GHVDHGKT. Residues 405-409 form a G2 region; sequence GITQK. Positions 426–429 are G3; sequence DTPG. GTP contacts are provided by residues 426–430 and 480–483; these read DTPGH and NKMD. The segment at 480–483 is G4; that stretch reads NKMD. Residues 516–518 are G5; it reads SAR.

This sequence belongs to the TRAFAC class translation factor GTPase superfamily. Classic translation factor GTPase family. IF-2 subfamily.

The protein resides in the cytoplasm. In terms of biological role, one of the essential components for the initiation of protein synthesis. Protects formylmethionyl-tRNA from spontaneous hydrolysis and promotes its binding to the 30S ribosomal subunits. Also involved in the hydrolysis of GTP during the formation of the 70S ribosomal complex. The chain is Translation initiation factor IF-2 from Lactobacillus helveticus (strain DPC 4571).